A 282-amino-acid chain; its full sequence is Glutamate racemase (282 aa).

Residues 13–14 and 45–46 contribute to the substrate site; these read DS and YG. C76 acts as the Proton donor/acceptor in catalysis. 77–78 provides a ligand contact to substrate; that stretch reads NT. Residue C186 is the Proton donor/acceptor of the active site. Position 187–188 (187–188) interacts with substrate; the sequence is TH.

Belongs to the aspartate/glutamate racemases family.

It carries out the reaction L-glutamate = D-glutamate. It participates in cell wall biogenesis; peptidoglycan biosynthesis. In terms of biological role, provides the (R)-glutamate required for cell wall biosynthesis. This chain is Glutamate racemase, found in Ralstonia pickettii (strain 12J).